We begin with the raw amino-acid sequence, 81 residues long: UPF0410 protein YwzA (81 aa).

3 helical membrane-spanning segments follow: residues 1 to 21, 27 to 47, and 56 to 76; these read MSFL…SLFV, GGII…HGLL, and GFAI…VSLL.

The protein belongs to the UPF0410 family.

The protein resides in the cell membrane. The polypeptide is UPF0410 protein YwzA (ywzA) (Bacillus subtilis (strain 168)).